The following is a 394-amino-acid chain: Methylthioribose kinase (394 aa).

Residues Asn44, Lys61, and 115-117 (EDL) each bind ATP. Asp233 lines the substrate pocket. An ATP-binding site is contributed by 250–252 (DPE). Arg337 is a binding site for substrate.

The protein belongs to the methylthioribose kinase family. Homodimer.

The catalysed reaction is 5-(methylsulfanyl)-D-ribose + ATP = 5-(methylsulfanyl)-alpha-D-ribose 1-phosphate + ADP + H(+). It functions in the pathway amino-acid biosynthesis; L-methionine biosynthesis via salvage pathway; S-methyl-5-thio-alpha-D-ribose 1-phosphate from S-methyl-5'-thioadenosine (hydrolase route): step 2/2. In terms of biological role, catalyzes the phosphorylation of methylthioribose into methylthioribose-1-phosphate. In Bacillus velezensis (strain DSM 23117 / BGSC 10A6 / LMG 26770 / FZB42) (Bacillus amyloliquefaciens subsp. plantarum), this protein is Methylthioribose kinase.